We begin with the raw amino-acid sequence, 257 residues long: UPF0246 protein Shewana3_3143 (257 aa).

The protein belongs to the UPF0246 family.

In Shewanella sp. (strain ANA-3), this protein is UPF0246 protein Shewana3_3143.